The sequence spans 789 residues: Kin of IRRE-like protein 1 (789 aa).

Residues 1-47 form the signal peptide; that stretch reads MTLENRSTCLMTCQSSLLPKKPRFLSQKMWAPHLVVAYLIFVTLALA. N-linked (GlcNAc...) asparagine glycosylation is found at asparagine 5, asparagine 78, and asparagine 172. At 48–531 the chain is on the extracellular side; that stretch reads LPGTQTRFSQ…REVLPVGIIA (484 aa). Ig-like C2-type domains follow at residues 49–147, 152–248, 255–335, 340–419, and 424–520; these read PGTQ…AKLT, PEDT…TSIE, PTVT…TLVN, PRIV…EVPL, and PPII…IQLE. The cysteines at positions 74 and 132 are disulfide-linked. Cystine bridges form between cysteine 175-cysteine 232 and cysteine 276-cysteine 319. N-linked (GlcNAc...) asparagine glycosylation is present at asparagine 329. Cysteines 361 and 403 form a disulfide. Residues 437 to 439 carry the Cell attachment site motif; sequence RGD. Cysteines 445 and 504 form a disulfide. An N-linked (GlcNAc...) asparagine glycan is attached at asparagine 503. Residues 532–552 traverse the membrane as a helical segment; the sequence is GATIGAGILLVFSFAALVFFL. Topologically, residues 553–789 are cytoplasmic; the sequence is YRRRKGSRKD…RFQQRMQTHV (237 aa). Position 606 is a phosphoserine (serine 606). 2 positions are modified to phosphotyrosine; by FYN: tyrosine 637 and tyrosine 638. 2 positions are modified to phosphotyrosine: tyrosine 654 and tyrosine 657. The interval 687 to 713 is disordered; sequence RAPASDYGTEPTPSGPSAPGGTDTTSQ. A compositionally biased stretch (low complexity) spans 694 to 712; it reads GTEPTPSGPSAPGGTDTTS. Tyrosine 756 is modified (phosphotyrosine).

This sequence belongs to the immunoglobulin superfamily. Interacts with TJP1/ZO-1 and with NPHS2/podocin (via the C-terminus). Interacts with NPHS1/nephrin (via the Ig-like domains); this interaction is dependent on KIRREL1 glycosylation. Homodimer (via the Ig-like domains). Interacts when tyrosine-phosphorylated with GRB2. Post-translationally, phosphorylation probably regulates the interaction with NPHS2. Phosphorylated at Tyr-637 and Tyr-638 by FYN, leading to GRB2 binding. In terms of processing, N-glycosylated.

The protein localises to the cell membrane. Required for proper function of the glomerular filtration barrier. It is involved in the maintenance of a stable podocyte architecture with interdigitating foot processes connected by specialized cell-cell junctions, known as the slit diaphragm. It is a signaling protein that needs the presence of TEC kinases to fully trans-activate the transcription factor AP-1. This Rattus norvegicus (Rat) protein is Kin of IRRE-like protein 1 (Kirrel1).